The following is a 160-amino-acid chain: Protransforming growth factor alpha (160 aa).

The signal sequence occupies residues 1-23; the sequence is MVPSAGQFALFALGILLAVCQAL. Positions 24–39 are cleaved as a propeptide — removed in mature form; sequence ENSTSALSADPPIAAA. At 24-98 the chain is on the extracellular side; it reads ENSTSALSAD…AVVAASQKKQ (75 aa). Residue N25 is glycosylated (N-linked (GlcNAc...) asparagine). Residues 43 to 83 enclose the EGF-like domain; sequence HFNDCPDSHSQFCFHGTCRFLVQEDKPACVCHSGYVGARCE. 3 disulfides stabilise this stretch: C47/C60, C55/C71, and C73/C82. Residues 90–160 constitute a propeptide, removed in mature form; the sequence is VVAASQKKQA…TACCHSETVV (71 aa). A helical transmembrane segment spans residues 99 to 124; sequence AITALVVVSIVALAVLIITCVLIHCC. Residues 125–160 lie on the Cytoplasmic side of the membrane; that stretch reads QVRKHCEWCRALICRHEKPSALLKGRTACCHSETVV. 2 S-palmitoyl cysteine lipidation sites follow: C153 and C154.

Interacts with the PDZ domains of MAGI3, SDCBP and SNTA1. The interaction with SDCBP, is required for the targeting to the cell surface. In the endoplasmic reticulum, in its immature form (i.e. with a prosegment and lacking full N-glycosylation), interacts with CNIH. In the Golgi apparatus, may form a complex with CNIH and GORASP2. Interacts (via cytoplasmic C-terminal domain) with NKD2.

The protein resides in the secreted. Its subcellular location is the extracellular space. The protein localises to the cell membrane. In terms of biological role, TGF alpha is a mitogenic polypeptide that is able to bind to the EGF receptor/EGFR and to act synergistically with TGF beta to promote anchorage-independent cell proliferation in soft agar. This is Protransforming growth factor alpha (TGFA) from Sus scrofa (Pig).